The chain runs to 239 residues: Norbelladine 4'-O-methyltransferase 4 (239 aa).

S-adenosyl-L-methionine is bound by residues Val-55, Glu-77, 79–80 (GV), Ser-85, Asp-103, and Ala-132. Asp-155 contacts a divalent metal cation. Asp-157 is an S-adenosyl-L-methionine binding site. The a divalent metal cation site is built by Asp-181 and Asn-182.

This sequence belongs to the class I-like SAM-binding methyltransferase superfamily. Cation-dependent O-methyltransferase family. The cofactor is Mg(2+).

It carries out the reaction norbelladine + S-adenosyl-L-methionine = 4'-O-methylnorbelladine + S-adenosyl-L-homocysteine + H(+). It functions in the pathway alkaloid biosynthesis. In terms of biological role, 4'-O-methyltransferase converting norbelladine to 4'-O-methylnorbelladine. 4'-O-methylnorbelladine is a precursor to all Amaryllidaceae alkaloids such as galanthamine, lycorine and haemanthamine, and including haemanthamine- and crinamine-type alkaloids, promising anticancer agents. This is Norbelladine 4'-O-methyltransferase 4 from Narcissus aff. pseudonarcissus MK-2014 (Daffodil).